The primary structure comprises 408 residues: Succinylornithine transaminase (408 aa).

An N6-(pyridoxal phosphate)lysine modification is found at lysine 252.

Belongs to the class-III pyridoxal-phosphate-dependent aminotransferase family. AstC subfamily. The cofactor is pyridoxal 5'-phosphate.

It catalyses the reaction N(2)-succinyl-L-ornithine + 2-oxoglutarate = N-succinyl-L-glutamate 5-semialdehyde + L-glutamate. It functions in the pathway amino-acid degradation; L-arginine degradation via AST pathway; L-glutamate and succinate from L-arginine: step 3/5. Catalyzes the transamination of N(2)-succinylornithine and alpha-ketoglutarate into N(2)-succinylglutamate semialdehyde and glutamate. Can also act as an acetylornithine aminotransferase. This is Succinylornithine transaminase from Salmonella agona (strain SL483).